The following is a 372-amino-acid chain: Queuine tRNA-ribosyltransferase (372 aa).

The active-site Proton acceptor is the Asp-89. Residues 89-93 (DSGGF), Asp-161, and Gly-232 contribute to the substrate site. Residues 262–268 (GIGDLPS) form an RNA binding region. Asp-281 acts as the Nucleophile in catalysis. The RNA binding; important for wobble base 34 recognition stretch occupies residues 286-290 (TKAAR). Zn(2+) contacts are provided by Cys-319, Cys-321, Cys-324, and His-351.

Belongs to the queuine tRNA-ribosyltransferase family. In terms of assembly, homodimer. Within each dimer, one monomer is responsible for RNA recognition and catalysis, while the other monomer binds to the replacement base PreQ1. The cofactor is Zn(2+).

The catalysed reaction is 7-aminomethyl-7-carbaguanine + guanosine(34) in tRNA = 7-aminomethyl-7-carbaguanosine(34) in tRNA + guanine. The protein operates within tRNA modification; tRNA-queuosine biosynthesis. In terms of biological role, catalyzes the base-exchange of a guanine (G) residue with the queuine precursor 7-aminomethyl-7-deazaguanine (PreQ1) at position 34 (anticodon wobble position) in tRNAs with GU(N) anticodons (tRNA-Asp, -Asn, -His and -Tyr). Catalysis occurs through a double-displacement mechanism. The nucleophile active site attacks the C1' of nucleotide 34 to detach the guanine base from the RNA, forming a covalent enzyme-RNA intermediate. The proton acceptor active site deprotonates the incoming PreQ1, allowing a nucleophilic attack on the C1' of the ribose to form the product. After dissociation, two additional enzymatic reactions on the tRNA convert PreQ1 to queuine (Q), resulting in the hypermodified nucleoside queuosine (7-(((4,5-cis-dihydroxy-2-cyclopenten-1-yl)amino)methyl)-7-deazaguanosine). This chain is Queuine tRNA-ribosyltransferase, found in Chlamydia caviae (strain ATCC VR-813 / DSM 19441 / 03DC25 / GPIC) (Chlamydophila caviae).